The sequence spans 80 residues: Photosystem II extrinsic protein V (80 aa).

Residue Met-47 coordinates heme.

Belongs to the cytochrome c family. PsbV subfamily. PSII is composed of 1 copy each of membrane proteins PsbA, PsbB, PsbC, PsbD, PsbE, PsbF, PsbH, PsbI, PsbJ, PsbK, PsbL, PsbM, PsbT, PsbY, PsbZ, Psb30/Ycf12, at least 3 peripheral proteins of the oxygen-evolving complex and a large number of cofactors. It forms dimeric complexes. Heme serves as cofactor.

Its subcellular location is the plastid. The protein resides in the chloroplast thylakoid membrane. Functionally, one of the extrinsic, lumenal subunits of photosystem II (PSII). PSII is a light-driven water plastoquinone oxidoreductase, using light energy to abstract electrons from H(2)O, generating a proton gradient subsequently used for ATP formation. The extrinsic proteins stabilize the structure of photosystem II oxygen-evolving complex (OEC), the ion environment of oxygen evolution and protect the OEC against heat-induced inactivation. This Thalassiosira weissflogii (Marine diatom) protein is Photosystem II extrinsic protein V.